The sequence spans 506 residues: Galactose/methyl galactoside import ATP-binding protein MglA (506 aa).

2 consecutive ABC transporter domains span residues 14–249 (LEMS…VGRS) and 264–506 (VILE…SLHL). 46 to 53 (GENGAGKS) contacts ATP.

The protein belongs to the ABC transporter superfamily. Galactose/methyl galactoside importer (TC 3.A.1.2.3) family. The complex is composed of one ATP-binding protein (MglA), two transmembrane proteins (MglC) and a solute-binding protein (MglB).

The protein localises to the cell inner membrane. It catalyses the reaction D-galactose(out) + ATP + H2O = D-galactose(in) + ADP + phosphate + H(+). The enzyme catalyses methyl beta-D-galactoside(out) + ATP + H2O = methyl beta-D-galactoside(in) + ADP + phosphate + H(+). Part of the ABC transporter complex MglABC involved in galactose/methyl galactoside import. Responsible for energy coupling to the transport system. The sequence is that of Galactose/methyl galactoside import ATP-binding protein MglA from Escherichia coli (strain K12).